We begin with the raw amino-acid sequence, 30 residues long: Platelet factor 4 (30 aa).

Belongs to the intercrine alpha (chemokine CxC) family. As to quaternary structure, homotetramer. Interacts with TNFAIP6 (via Link domain). Interacts with CCR1. Interacts with CXCR3. In terms of processing, binds non-covalently to a proteoglycan molecule.

The protein localises to the secreted. In terms of biological role, chemokine released during platelet aggregation that plays a role in different biological processes including hematopoiesis, cell proliferation, differentiation, and activation. Acts via different functional receptors including CCR1, CXCR3A or CXCR3B. Upon interaction with CXCR3A receptor, induces activated T-lymphocytes migration mediated via downstream Ras/extracellular signal-regulated kinase (ERK) signaling. Neutralizes the anticoagulant effect of heparin by binding more strongly to heparin than to the chondroitin-4-sulfate chains of the carrier molecule. Plays a role in the inhibition of hematopoiesis and in the maintenance of hematopoietic stem cell (HSC) quiescence. Chemotactic for neutrophils and monocytes via CCR1. Inhibits endothelial cell proliferation. In cooperation with toll-like receptor 8/TLR8, induces chromatin remodeling and activates inflammatory gene expression via the TBK1-IRF5 axis. In addition, induces myofibroblast differentiation and collagen synthesis in different precursor cells, including endothelial cells, by stimulating endothelial-to-mesenchymal transition. The polypeptide is Platelet factor 4 (PF4) (Oryctolagus cuniculus (Rabbit)).